A 394-amino-acid chain; its full sequence is Dual-specificity RNA methyltransferase RlmN (394 aa).

The active-site Proton acceptor is the glutamate 115. The Radical SAM core domain occupies 121-360 (EADRATLCVS…VIVRKTRGDD (240 aa)). The cysteines at positions 128 and 365 are disulfide-linked. Residues cysteine 135, cysteine 139, and cysteine 142 each contribute to the [4Fe-4S] cluster site. S-adenosyl-L-methionine-binding positions include 189-190 (GE), serine 221, 243-245 (SLH), and asparagine 322. The active-site S-methylcysteine intermediate is the cysteine 365.

Belongs to the radical SAM superfamily. RlmN family. [4Fe-4S] cluster serves as cofactor.

The protein resides in the cytoplasm. The catalysed reaction is adenosine(2503) in 23S rRNA + 2 reduced [2Fe-2S]-[ferredoxin] + 2 S-adenosyl-L-methionine = 2-methyladenosine(2503) in 23S rRNA + 5'-deoxyadenosine + L-methionine + 2 oxidized [2Fe-2S]-[ferredoxin] + S-adenosyl-L-homocysteine. It carries out the reaction adenosine(37) in tRNA + 2 reduced [2Fe-2S]-[ferredoxin] + 2 S-adenosyl-L-methionine = 2-methyladenosine(37) in tRNA + 5'-deoxyadenosine + L-methionine + 2 oxidized [2Fe-2S]-[ferredoxin] + S-adenosyl-L-homocysteine. Specifically methylates position 2 of adenine 2503 in 23S rRNA and position 2 of adenine 37 in tRNAs. m2A2503 modification seems to play a crucial role in the proofreading step occurring at the peptidyl transferase center and thus would serve to optimize ribosomal fidelity. In Pasteurella multocida (strain Pm70), this protein is Dual-specificity RNA methyltransferase RlmN.